The chain runs to 422 residues: MPLITVGINHKTAPVSIRERVAFAPEKMIDALSSLISENKANEAVIVSTCNRTELYCSVEDLSKVDDVIAWLGKYHGIALPELQQYCYTHADDDSVRHVMRVASGLDSLILGEPQILGQVKSAYAVSQEGSCIGPELESLFQRTFSVAKRVRTDTAIGENPVSIAFAAVSLAQRIFADIRNSTALLIGAGQTIELVARHLKENGIKHIIVANRTLARAQILADELNAEAIMLGDIGDYLSQADIVISSTASQLPIIGKGMVERATSQRRHSPMLLIDIAVPRDIEPEVEEVNDAYLYTVDDLHSVIEENVRARQDAAKAAEQMIEEGVDSYRRVVESRKVSDLIVTFRQSAEAIKNTELEKALKGLEMGQSPEQVLNKLAHGLMNKLIHAPTRYLRDAGADADQDALIIASNVLGIYEEKDN.

Substrate-binding positions include Thr49–Arg52, Ser108, Glu113–Gln115, and Gln119. Cys50 (nucleophile) is an active-site residue. Gly188–Ile193 contacts NADP(+).

The protein belongs to the glutamyl-tRNA reductase family. In terms of assembly, homodimer.

It carries out the reaction (S)-4-amino-5-oxopentanoate + tRNA(Glu) + NADP(+) = L-glutamyl-tRNA(Glu) + NADPH + H(+). It participates in porphyrin-containing compound metabolism; protoporphyrin-IX biosynthesis; 5-aminolevulinate from L-glutamyl-tRNA(Glu): step 1/2. Catalyzes the NADPH-dependent reduction of glutamyl-tRNA(Glu) to glutamate 1-semialdehyde (GSA). This Marinomonas sp. (strain MWYL1) protein is Glutamyl-tRNA reductase.